We begin with the raw amino-acid sequence, 86 residues long: Toxin Td1 (86 aa).

Positions 1–20 (MIRFILFISCFFLIGMVIEC) are cleaved as a signal peptide. In terms of domain architecture, LCN-type CS-alpha/beta spans 21–83 (KDGYLMEPNG…VWERATNRCG (63 aa)). 4 disulfide bridges follow: Cys-31–Cys-82, Cys-35–Cys-57, Cys-43–Cys-63, and Cys-47–Cys-65. Lys-84 bears the Lysine amide mark.

Expressed by the venom gland.

The protein localises to the secreted. Functionally, beta toxins bind voltage-independently at site-4 of sodium channels (Nav) and shift the voltage of activation toward more negative potentials thereby affecting sodium channel activation and promoting spontaneous and repetitive firing. The polypeptide is Toxin Td1 (Tityus discrepans (Venezuelan scorpion)).